Consider the following 175-residue polypeptide: MSVLRALPRVARVVRPAPPSLRSISTTNTIFKSPTADPFPLPFSDPELAHANNSLPSNSEEWPLPEPLDRTGEDEKTLRARLIYQTRKRGTLETDLILSTFARDELPNMDFEEMKQFDKLLDEPDWDIFYWSVKKRDPPARWKGTPLLEKLQKHAKNEGKVVRMMPELMQKEPDL.

The interval 42–71 is disordered; it reads PFSDPELAHANNSLPSNSEEWPLPEPLDRT. The segment covering 51–60 has biased composition (polar residues); it reads ANNSLPSNSE.

Belongs to the SDHAF2 family. In terms of assembly, interacts with the flavoprotein subunit within the SDH catalytic dimer.

It is found in the mitochondrion matrix. Plays an essential role in the assembly of succinate dehydrogenase (SDH), an enzyme complex (also referred to as respiratory complex II) that is a component of both the tricarboxylic acid (TCA) cycle and the mitochondrial electron transport chain, and which couples the oxidation of succinate to fumarate with the reduction of ubiquinone (coenzyme Q) to ubiquinol. Required for flavinylation (covalent attachment of FAD) of the flavoprotein subunit of the SDH catalytic dimer. This Cryptococcus neoformans var. neoformans serotype D (strain B-3501A) (Filobasidiella neoformans) protein is Succinate dehydrogenase assembly factor 2, mitochondrial.